A 316-amino-acid chain; its full sequence is Transaldolase (316 aa).

The active-site Schiff-base intermediate with substrate is the lysine 127.

The protein belongs to the transaldolase family. Type 2 subfamily.

The protein localises to the cytoplasm. The catalysed reaction is D-sedoheptulose 7-phosphate + D-glyceraldehyde 3-phosphate = D-erythrose 4-phosphate + beta-D-fructose 6-phosphate. It participates in carbohydrate degradation; pentose phosphate pathway; D-glyceraldehyde 3-phosphate and beta-D-fructose 6-phosphate from D-ribose 5-phosphate and D-xylulose 5-phosphate (non-oxidative stage): step 2/3. Transaldolase is important for the balance of metabolites in the pentose-phosphate pathway. The protein is Transaldolase of Helicobacter pylori (strain P12).